Reading from the N-terminus, the 995-residue chain is MKIKFLSAAIAASLALPLSAATLVTSFEEADYSSSENNAEFLEVSGDATSEVSTEQATDGNQSIKASFDAAFKPMVVWNWASWNWGAEDVMSVDVVNPNDTDVTFAIKLIDSDILPDWVDESQTSLDYFTVSANTTQTFSFNLNGGNEFQTHGENFSKDKVIGVQFMLSENDPQVLYFDNIMVDGETVTPPPSDGAVNTQTAPVATLAQIEDFETIPDYLRPDGGVNVSTTTEIVTKGAAAMAAEFTAGWNGLVFAGTWNWAELGEHTAVAVDVSNNSDSNIWLYSRIEDVNSQGETATRGVLVKAGESKTIYTSLNDNPSLLTQDERVSALGLRDIPADPMSAQNGWGDFVALDKSQITAIRYFIGELASGETSQTLVFDNMRVIKDLNHESAYAEMTDAMGQNNLVTYAGKVASKEELAKLSDPEMAALGELTNRNMYGGNPDSSPATDCVLATPASFNACKDADGNWQLVDPAGNAFFSTGVDNIRLQDTYTMTGVSSDAESESALRQSMFTEIPSDYVNENYGPVHSGPVSQGQAVSFYANNLITRHASEDVWRDITVKRMKDWGFNTLGNWTDPALYANGDVPYVANGWSTSGADRLPVKQIGSGYWGPLPDPWDANFATNAATMAAEIKAQVEGNEEYLVGIFVDNEMSWGNVTDVEGSRYAQTLAVFNTDGTDATTSPAKNSFIWFLENQRYTGGIADLNAAWGTDYASWDATSPAQELAYVAGMEADMQFLAWQFAFQYFNTVNTALKAELPNHLYLGSRFADWGRTPDVVSAAAAVVDVMSYNIYKDSIAAADWDADALSQIEAIDKPVIIGEFHFGALDSGSFAEGVVNATSQQDRADKMVSFYESVNAHKNFVGAHWFQYIDSPLTGRAWDGENYNVGFVSNTDTPYTLMTDAAREFNCGMYGTDCSSLSNATEAASRAGELYTGTNIGVSHSGPEAPDPGEPVDPPIDPPTPPTGGVTGGGGSAGWLSLLGLAGVFLLRRRKV.

Positions 1–20 are cleaved as a signal peptide; sequence MKIKFLSAAIAASLALPLSA. The tract at residues 936 to 972 is disordered; that stretch reads GTNIGVSHSGPEAPDPGEPVDPPIDPPTPPTGGVTGG. The segment covering 948 to 965 has biased composition (pro residues); that stretch reads APDPGEPVDPPIDPPTPP.

The protein belongs to the glycosyl hydrolase 50 family.

The enzyme catalyses Hydrolysis of (1-&gt;4)-beta-D-galactosidic linkages in agarose, giving the tetramer as the predominant product.. Hydrolyzes agarose and also neoagarotetraose to yield neoagarobiose. This is Beta-agarase A (agaA) from Vibrio sp. (strain JT0107).